Consider the following 92-residue polypeptide: MAVKIRLKRMGAKRDPFYRIVVSDARSPRDGRFIEQIGYYDPLEEPARISVDEAKARVWLQQGAQMTETVRSLFKKSGVLERLGAERAEERG.

Belongs to the bacterial ribosomal protein bS16 family.

The protein is Small ribosomal subunit protein bS16 of Desulforudis audaxviator (strain MP104C).